The following is a 232-amino-acid chain: Glutathione S-transferase E14 (232 aa).

Positions 4–85 (PKPILYYDER…HLAEKFDEGG (82 aa)) constitute a GST N-terminal domain. Residues 91-218 (EHAERMKVLN…RQTMESVGSF (128 aa)) enclose the GST C-terminal domain.

This sequence belongs to the GST superfamily. Epsilon family. Expressed in the adult ovary (at protein level).

The catalysed reaction is RX + glutathione = an S-substituted glutathione + a halide anion + H(+). Conjugation of reduced glutathione to a wide number of exogenous and endogenous hydrophobic electrophiles. Essential for ecdysteroid biosynthesis. May be involved in detoxification. This chain is Glutathione S-transferase E14, found in Drosophila melanogaster (Fruit fly).